A 264-amino-acid chain; its full sequence is Thymidylate synthase (264 aa).

Residue Arg21 participates in dUMP binding. His51 contacts (6R)-5,10-methylene-5,6,7,8-tetrahydrofolate. DUMP is bound at residue 126 to 127 (RR). Cys146 acts as the Nucleophile in catalysis. Residues 166 to 169 (RSCD), Asn177, and 207 to 209 (HLY) contribute to the dUMP site. Asp169 provides a ligand contact to (6R)-5,10-methylene-5,6,7,8-tetrahydrofolate. Ala263 is a (6R)-5,10-methylene-5,6,7,8-tetrahydrofolate binding site.

This sequence belongs to the thymidylate synthase family. Bacterial-type ThyA subfamily. In terms of assembly, homodimer.

Its subcellular location is the cytoplasm. The enzyme catalyses dUMP + (6R)-5,10-methylene-5,6,7,8-tetrahydrofolate = 7,8-dihydrofolate + dTMP. Its pathway is pyrimidine metabolism; dTTP biosynthesis. Functionally, catalyzes the reductive methylation of 2'-deoxyuridine-5'-monophosphate (dUMP) to 2'-deoxythymidine-5'-monophosphate (dTMP) while utilizing 5,10-methylenetetrahydrofolate (mTHF) as the methyl donor and reductant in the reaction, yielding dihydrofolate (DHF) as a by-product. This enzymatic reaction provides an intracellular de novo source of dTMP, an essential precursor for DNA biosynthesis. The chain is Thymidylate synthase from Shigella flexneri serotype 5b (strain 8401).